We begin with the raw amino-acid sequence, 575 residues long: MDTTGRLHHRKHATPVEDRSPTTPKASDALPLPLYLTNAVFFTLFFSVAYYLLHRWRDKIRNSTPLHIVTLSEIVAIVSLIASFIYLLGFFGIDFVQSFIARASHDVWDLEDTDPNYLIDEDHRLVTCPPANISTKTTIIAAPTKLPTSEPLIAPLVSEEDEMIVNSVVDGKIPSYSLESKLGDCKRAAAIRREALQRMTRRSLEGLPVEGFDYESILGQCCEMPVGYVQIPVGIAGPLLLNGREYSVPMATTEGCLVASTNRGCKAIYLSGGATSVLLKDGMTRAPVVRFASATRAAELKFFLEDPDNFDTLAVVFNKSSRFARLQGIKCSIAGKNLYIRFSCSTGDAMGMNMVSKGVQNVLEFLQSDFSDMDVIGISGNFCSDKKPAAVNWIEGRGKSVVCEAIIKEEVVKKVLKTNVASLVELNMLKNLAGSAVAGALGGFNAHAGNIVSAIFIATGQDPAQNVESSHCITMMEAVNDGKDLHISVTMPSIEVGTVGGGTQLASQSACLNLLGVKGANKESPGSNSRLLAAIVAGSVLAGELSLMSAIAAGQLVKSHMKYNRSSKDMSKAAS.

Over residues 1–13 the composition is skewed to basic residues; that stretch reads MDTTGRLHHRKHA. A disordered region spans residues 1–25; the sequence is MDTTGRLHHRKHATPVEDRSPTTPK. The next 2 membrane-spanning stretches (helical) occupy residues 29–49 and 73–93; these read ALPL…FSVA and EIVA…FFGI. Residues 97-160 form a linker region; that stretch reads QSFIARASHD…PLIAPLVSEE (64 aa). Residue N132 is glycosylated (N-linked (GlcNAc...) asparagine). The catalytic stretch occupies residues 161–575; it reads DEMIVNSVVD…SSKDMSKAAS (415 aa). Catalysis depends on E254, which acts as the Charge relay system. The N-linked (GlcNAc...) asparagine glycan is linked to N318. Residues K386 and D462 each act as charge relay system in the active site. A helical transmembrane segment spans residues 531-551; sequence LLAAIVAGSVLAGELSLMSAI. Residue H560 is the Proton donor of the active site. N564 carries an N-linked (GlcNAc...) asparagine glycan.

The protein belongs to the HMG-CoA reductase family.

Its subcellular location is the endoplasmic reticulum membrane. It localises to the mitochondrion membrane. The protein resides in the plastid membrane. It catalyses the reaction (R)-mevalonate + 2 NADP(+) + CoA = (3S)-3-hydroxy-3-methylglutaryl-CoA + 2 NADPH + 2 H(+). It participates in metabolic intermediate biosynthesis; (R)-mevalonate biosynthesis; (R)-mevalonate from acetyl-CoA: step 3/3. In terms of biological role, catalyzes the synthesis of mevalonate. The specific precursor of all isoprenoid compounds present in plants. In Hevea brasiliensis (Para rubber tree), this protein is 3-hydroxy-3-methylglutaryl-coenzyme A reductase 1 (HMGR1).